Here is a 251-residue protein sequence, read N- to C-terminus: MSGHNKWANIKHRKGAQDAKRSQMFTKLIRELTIAAREGGGDPESNPRLRTAVENAKAANMPKDKIESAIKKGTGELEGEELTEIMYEAYGPGGVALLISVVTDNKNRTAQEVRHVLSKWGGALAESGSVSWNFERKGLITIPKEEVEDIDELMLLAVEAGAEDLDENTDPLEIITAPENLTQVRNALKEAGYTVSEKLTFLPKTTVKLSDEDAEKLLKLLNALDDMDDVQEVFGNYEIDDEVMERLAANI.

A disordered region spans residues 1-22; the sequence is MSGHNKWANIKHRKGAQDAKRS.

It belongs to the TACO1 family.

The protein localises to the cytoplasm. The chain is Probable transcriptional regulatory protein Pmob_0807 from Petrotoga mobilis (strain DSM 10674 / SJ95).